The following is a 139-amino-acid chain: Aspartate 1-decarboxylase (139 aa).

Residue Ser-26 is the Schiff-base intermediate with substrate; via pyruvic acid of the active site. The residue at position 26 (Ser-26) is a Pyruvic acid (Ser). Thr-58 contributes to the substrate binding site. Tyr-59 (proton donor) is an active-site residue. 72 to 74 (GGA) provides a ligand contact to substrate.

The protein belongs to the PanD family. In terms of assembly, heterooctamer of four alpha and four beta subunits. It depends on pyruvate as a cofactor. In terms of processing, is synthesized initially as an inactive proenzyme, which is activated by self-cleavage at a specific serine bond to produce a beta-subunit with a hydroxyl group at its C-terminus and an alpha-subunit with a pyruvoyl group at its N-terminus.

Its subcellular location is the cytoplasm. It carries out the reaction L-aspartate + H(+) = beta-alanine + CO2. The protein operates within cofactor biosynthesis; (R)-pantothenate biosynthesis; beta-alanine from L-aspartate: step 1/1. In terms of biological role, catalyzes the pyruvoyl-dependent decarboxylation of aspartate to produce beta-alanine. This Microcystis aeruginosa (strain NIES-843 / IAM M-2473) protein is Aspartate 1-decarboxylase.